The following is a 421-amino-acid chain: Gamma-glutamyl phosphate reductase (421 aa).

This sequence belongs to the gamma-glutamyl phosphate reductase family.

The protein localises to the cytoplasm. It carries out the reaction L-glutamate 5-semialdehyde + phosphate + NADP(+) = L-glutamyl 5-phosphate + NADPH + H(+). It functions in the pathway amino-acid biosynthesis; L-proline biosynthesis; L-glutamate 5-semialdehyde from L-glutamate: step 2/2. Catalyzes the NADPH-dependent reduction of L-glutamate 5-phosphate into L-glutamate 5-semialdehyde and phosphate. The product spontaneously undergoes cyclization to form 1-pyrroline-5-carboxylate. This chain is Gamma-glutamyl phosphate reductase, found in Brucella suis biovar 1 (strain 1330).